Consider the following 144-residue polypeptide: Probable transcription termination protein NusA (144 aa).

The KH domain occupies 101-144 (RTDIVVGVKPEEIGKVIGKEGKNIKLFKDAVSRYFNVNSISVKQ).

The protein belongs to the NusA family.

The protein localises to the cytoplasm. Functionally, participates in transcription termination. This is Probable transcription termination protein NusA from Thermoplasma acidophilum (strain ATCC 25905 / DSM 1728 / JCM 9062 / NBRC 15155 / AMRC-C165).